The chain runs to 207 residues: uncharacterized protein (207 aa).

This sequence belongs to the IIV-6 350L family.

This is an uncharacterized protein from Invertebrate iridescent virus 6 (IIV-6).